The chain runs to 148 residues: Hemoglobin subunit beta (148 aa).

Residues Asp3–His148 enclose the Globin domain. Heme b contacts are provided by His64 and His93.

This sequence belongs to the globin family. Heterotetramer of two alpha chains and two beta chains. In terms of tissue distribution, red blood cells.

In terms of biological role, involved in oxygen transport from gills to the various peripheral tissues. The sequence is that of Hemoglobin subunit beta (hbb) from Salmo salar (Atlantic salmon).